The following is a 471-amino-acid chain: MKIKTRFAPSPTGYLHVGGARTALYSWLFARNHGGEFVLRIEDTDLERSTPEAIEAIMDGMNWLSLEWDEGPYYQTKRFDRYNAVIDQMLEEGTAYKCYCSKERLEALREEQMAKGEKPRYDGRCRHSHEHHADDEPCVVRFANPQEGSVVFDDQIRGPIEFSNQELDDLIIRRTDGSPTYNFCVVVDDWDMEITHVIRGEDHINNTPRQINILKALKAPVPVYAHVSMINGDDGKKLSKRHGAVSVMQYRDDGYLPEALLNYLVRLGWSHGDQEIFTREEMIKYFTLNAVSKSASAFNTDKLLWLNHHYINALPPEYVATHLQWHIEQENIDTRNGPQLADLVKLLGERCKTLKEMAQSCRYFYEDFAEFDADAAKKHLRPVARQPLEVVRDKLTAITDWTAENVHHAIQATADELEVGMGKVGMPLRVAVTGAGQSPALDVTVHAIGKTRSIERINKALAFIAERENQH.

The short motif at 9 to 19 is the 'HIGH' region element; sequence PSPTGYLHVGG. Residues Cys-98, Cys-100, Cys-125, and His-127 each contribute to the Zn(2+) site. The short motif at 237–241 is the 'KMSKS' region element; that stretch reads KLSKR. ATP is bound at residue Lys-240.

This sequence belongs to the class-I aminoacyl-tRNA synthetase family. Glutamate--tRNA ligase type 1 subfamily. In terms of assembly, monomer. Zn(2+) is required as a cofactor.

Its subcellular location is the cytoplasm. It catalyses the reaction tRNA(Glu) + L-glutamate + ATP = L-glutamyl-tRNA(Glu) + AMP + diphosphate. In terms of biological role, catalyzes the attachment of glutamate to tRNA(Glu) in a two-step reaction: glutamate is first activated by ATP to form Glu-AMP and then transferred to the acceptor end of tRNA(Glu). The protein is Glutamate--tRNA ligase of Escherichia coli O1:K1 / APEC.